We begin with the raw amino-acid sequence, 114 residues long: Protein Tat (114 aa).

An interaction with human CREBBP region spans residues 1–24 (MDPVDPEVPPWHHPGSQPQIPCNN). Residues 1–48 (MDPVDPEVPPWHHPGSQPQIPCNNCYCKRCCYHCYVCFVRKGLGISYG) are transactivation. Zn(2+) is bound by residues cysteine 22, cysteine 25, and cysteine 27. The segment at 22–37 (CNNCYCKRCCYHCYVC) is cysteine-rich. An N6-acetyllysine; by host PCAF modification is found at lysine 28. The Zn(2+) site is built by cysteine 30, histidine 33, cysteine 34, and cysteine 37. Positions 38–48 (FVRKGLGISYG) are core. A disordered region spans residues 48-114 (GRKKRGRPAA…CHCCTRTSEQ (67 aa)). Residues 49–56 (RKKRGRPA) carry the Nuclear localization signal, RNA-binding (TAR), and protein transduction motif. An interaction with the host capping enzyme RNGTT region spans residues 49–84 (RKKRGRPAAASHPDHKDPVPKQSPTITKRKQERQEE). N6-acetyllysine; by host EP300 and GCN5L2 occurs at positions 50 and 51. Arginine 52 carries the asymmetric dimethylarginine; by host PRMT6 modification. Residue lysine 69 forms a Glycyl lysine isopeptide (Lys-Gly) (interchain with G-Cter in ubiquitin) linkage.

The protein belongs to the lentiviruses Tat family. As to quaternary structure, interacts with host CCNT1. Associates with the P-TEFb complex composed at least of Tat, P-TEFb (CDK9 and CCNT1), TAR RNA, RNA Pol II. Recruits the HATs CREBBP, TAF1/TFIID, EP300, PCAF and GCN5L2. Interacts with host KAT5/Tip60; this interaction targets the latter to degradation. Interacts with the host deacetylase SIRT1. Interacts with host capping enzyme RNGTT; this interaction stimulates RNGTT. Binds to host KDR, and to the host integrins ITGAV/ITGB3 and ITGA5/ITGB1. Interacts with host KPNB1/importin beta-1 without previous binding to KPNA1/importin alpha-1. Interacts with EIF2AK2. Interacts with host nucleosome assembly protein NAP1L1; this interaction may be required for the transport of Tat within the nucleus, since the two proteins interact at the nuclear rim. Interacts with host C1QBP/SF2P32; this interaction involves lysine-acetylated Tat. Interacts with the host chemokine receptors CCR2, CCR3 and CXCR4. Interacts with host DPP4/CD26; this interaction may trigger an anti-proliferative effect. Interacts with host LDLR. Interacts with the host extracellular matrix metalloproteinase MMP1. Interacts with host PRMT6; this interaction mediates Tat's methylation. Interacts with, and is ubiquitinated by MDM2/Hdm2. Interacts with host PSMC3 and HTATIP2. Interacts with STAB1; this interaction may overcome SATB1-mediated repression of IL2 and IL2RA (interleukin) in T cells by binding to the same domain than HDAC1. Interacts (when acetylated) with human CDK13, thereby increasing HIV-1 mRNA splicing and promoting the production of the doubly spliced HIV-1 protein Nef. Interacts with host TBP; this interaction modulates the activity of transcriptional pre-initiation complex. Interacts with host RELA. Interacts with host PLSCR1; this interaction negatively regulates Tat transactivation activity by altering its subcellular distribution. In terms of processing, asymmetrical arginine methylation by host PRMT6 seems to diminish the transactivation capacity of Tat and affects the interaction with host CCNT1. Acetylation by EP300, CREBBP, GCN5L2/GCN5 and PCAF regulates the transactivation activity of Tat. EP300-mediated acetylation of Lys-50 promotes dissociation of Tat from the TAR RNA through the competitive binding to PCAF's bromodomain. In addition, the non-acetylated Tat's N-terminus can also interact with PCAF. PCAF-mediated acetylation of Lys-28 enhances Tat's binding to CCNT1. Lys-50 is deacetylated by SIRT1. Post-translationally, polyubiquitination by host MDM2 does not target Tat to degradation, but activates its transactivation function and fosters interaction with CCNT1 and TAR RNA. In terms of processing, phosphorylated by EIF2AK2 on serine and threonine residues adjacent to the basic region important for TAR RNA binding and function. Phosphorylation of Tat by EIF2AK2 is dependent on the prior activation of EIF2AK2 by dsRNA.

It localises to the host nucleus. The protein resides in the host nucleolus. It is found in the host cytoplasm. The protein localises to the secreted. Its function is as follows. Transcriptional activator that increases RNA Pol II processivity, thereby increasing the level of full-length viral transcripts. Recognizes a hairpin structure at the 5'-LTR of the nascent viral mRNAs referred to as the transactivation responsive RNA element (TAR) and recruits the cyclin T1-CDK9 complex (P-TEFb complex) that will in turn hyperphosphorylate the RNA polymerase II to allow efficient elongation. The CDK9 component of P-TEFb and other Tat-activated kinases hyperphosphorylate the C-terminus of RNA Pol II that becomes stabilized and much more processive. Other factors such as HTATSF1/Tat-SF1, SUPT5H/SPT5, and HTATIP2 are also important for Tat's function. Besides its effect on RNA Pol II processivity, Tat induces chromatin remodeling of proviral genes by recruiting the histone acetyltransferases (HATs) CREBBP, EP300 and PCAF to the chromatin. This also contributes to the increase in proviral transcription rate, especially when the provirus integrates in transcriptionally silent region of the host genome. To ensure maximal activation of the LTR, Tat mediates nuclear translocation of NF-kappa-B by interacting with host RELA. Through its interaction with host TBP, Tat may also modulate transcription initiation. Tat can reactivate a latently infected cell by penetrating in it and transactivating its LTR promoter. In the cytoplasm, Tat is thought to act as a translational activator of HIV-1 mRNAs. In terms of biological role, extracellular circulating Tat can be endocytosed by surrounding uninfected cells via the binding to several surface receptors such as CD26, CXCR4, heparan sulfate proteoglycans (HSPG) or LDLR. Neurons are rarely infected, but they internalize Tat via their LDLR. Through its interaction with nuclear HATs, Tat is potentially able to control the acetylation-dependent cellular gene expression. Modulates the expression of many cellular genes involved in cell survival, proliferation or in coding for cytokines or cytokine receptors. Tat plays a role in T-cell and neurons apoptosis. Tat induced neurotoxicity and apoptosis probably contribute to neuroAIDS. Circulating Tat also acts as a chemokine-like and/or growth factor-like molecule that binds to specific receptors on the surface of the cells, affecting many cellular pathways. In the vascular system, Tat binds to ITGAV/ITGB3 and ITGA5/ITGB1 integrins dimers at the surface of endothelial cells and competes with bFGF for heparin-binding sites, leading to an excess of soluble bFGF. The sequence is that of Protein Tat from Homo sapiens (Human).